The chain runs to 186 residues: ATP synthase subunit b, chloroplastic (186 aa).

The helical transmembrane segment at 27–43 threads the bilayer; the sequence is IFETNILNLAVVLGILL.

Belongs to the ATPase B chain family. As to quaternary structure, F-type ATPases have 2 components, F(1) - the catalytic core - and F(0) - the membrane proton channel. F(1) has five subunits: alpha(3), beta(3), gamma(1), delta(1), epsilon(1). F(0) has four main subunits: a(1), b(1), b'(1) and c(10-14). The alpha and beta chains form an alternating ring which encloses part of the gamma chain. F(1) is attached to F(0) by a central stalk formed by the gamma and epsilon chains, while a peripheral stalk is formed by the delta, b and b' chains.

It is found in the plastid. It localises to the chloroplast thylakoid membrane. Functionally, f(1)F(0) ATP synthase produces ATP from ADP in the presence of a proton or sodium gradient. F-type ATPases consist of two structural domains, F(1) containing the extramembraneous catalytic core and F(0) containing the membrane proton channel, linked together by a central stalk and a peripheral stalk. During catalysis, ATP synthesis in the catalytic domain of F(1) is coupled via a rotary mechanism of the central stalk subunits to proton translocation. Component of the F(0) channel, it forms part of the peripheral stalk, linking F(1) to F(0). In Mesostigma viride (Green alga), this protein is ATP synthase subunit b, chloroplastic.